The chain runs to 540 residues: Hexose transporter HXT14 (540 aa).

Residues 1-56 (MTAQIPYQHSSGYISHFHNNELDAGRGRDYNVTIKYLDDKEENIEGQAAKISHNAS) lie on the Cytoplasmic side of the membrane. A helical transmembrane segment spans residues 57 to 76 (LHIPVLLCLVISLGGFIFGW). The Extracellular segment spans residues 77 to 119 (DIGTIGGMTNMVSFQEKFGTTNIIHDDETIFVSTKKLTDLQIG). The chain crosses the membrane as a helical span at residues 120 to 140 (LIISIFNISCGVGALTLSKIG). Residues 141-146 (DWIGRK) lie on the Cytoplasmic side of the membrane. The chain crosses the membrane as a helical span at residues 147 to 167 (GGIWFALVVYCIGITIQILSY). Residues 168 to 177 (GRWYFLTLGR) are Extracellular-facing. A helical transmembrane segment spans residues 178–198 (AVTGIGVGVTTVLVPMFLSEN). The Cytoplasmic portion of the chain corresponds to 199–204 (SPLKIR). Residues 205–225 (GSMVSTYQLIVTFGILMGNIL) traverse the membrane as a helical segment. The Extracellular segment spans residues 226 to 243 (NFICERCYKDPTQNIAWQ). A helical membrane pass occupies residues 244–264 (LPLFLGYIWAIIIGMSLVYVP). Over 265-357 (ESPQYLAKIK…IMAFQQLSGI (93 aa)) the chain is Cytoplasmic. The helical transmembrane segment at 358-374 (NYFFYYGTSVFKGVGIK) threads the bilayer. The Extracellular portion of the chain corresponds to 375–380 (DPYITS). Residues 381-398 (IILSSVNFLSTILGIYYV) form a helical membrane-spanning segment. The Cytoplasmic segment spans residues 399-405 (EKWGHKT). Residues 406 to 426 (CLLYGSTNLLFYMMTYATVGT) form a helical membrane-spanning segment. Residues 427-440 (FGRETDFSNIVLII) lie on the Extracellular side of the membrane. Residues 441 to 461 (VTCCFIFWFAITLGPVTFVLV) traverse the membrane as a helical segment. Over 462–478 (SELFPLRTRAISMAICT) the chain is Cytoplasmic. A helical transmembrane segment spans residues 479-499 (FINWMFNFLISLLTPMIVSKI). Position 500 (Asp-500) is a topological domain, extracellular. Residues 501-521 (FKLGYIFAACLLALIIFSWIL) form a helical membrane-spanning segment. The Cytoplasmic portion of the chain corresponds to 522 to 540 (VPETRKKNEQEINKIFEPE).

Belongs to the major facilitator superfamily. Sugar transporter (TC 2.A.1.1) family.

It is found in the membrane. Functionally, probable glucose transporter. In Saccharomyces cerevisiae (strain ATCC 204508 / S288c) (Baker's yeast), this protein is Hexose transporter HXT14 (HXT14).